Here is a 179-residue protein sequence, read N- to C-terminus: NADH-quinone oxidoreductase subunit I (179 aa).

2 consecutive 4Fe-4S ferredoxin-type domains span residues 49-79 (LTRD…LQKG) and 89-118 (EFFR…LTPD). The [4Fe-4S] cluster site is built by C59, C62, C65, C69, C98, C101, C104, and C108.

Belongs to the complex I 23 kDa subunit family. As to quaternary structure, NDH-1 is composed of 14 different subunits. Subunits NuoA, H, J, K, L, M, N constitute the membrane sector of the complex. Requires [4Fe-4S] cluster as cofactor.

The protein localises to the cell inner membrane. It carries out the reaction a quinone + NADH + 5 H(+)(in) = a quinol + NAD(+) + 4 H(+)(out). NDH-1 shuttles electrons from NADH, via FMN and iron-sulfur (Fe-S) centers, to quinones in the respiratory chain. The immediate electron acceptor for the enzyme in this species is believed to be ubiquinone. Couples the redox reaction to proton translocation (for every two electrons transferred, four hydrogen ions are translocated across the cytoplasmic membrane), and thus conserves the redox energy in a proton gradient. The polypeptide is NADH-quinone oxidoreductase subunit I (Chromohalobacter salexigens (strain ATCC BAA-138 / DSM 3043 / CIP 106854 / NCIMB 13768 / 1H11)).